Here is a 337-residue protein sequence, read N- to C-terminus: Cytoskeleton protein RodZ (337 aa).

At methionine 1–glycine 111 the chain is on the cytoplasmic side. The region spanning leucine 19–leucine 71 is the HTH cro/C1-type domain. The H-T-H motif DNA-binding region spans glutamine 30–glutamate 49. Residues tryptophan 112 to tryptophan 132 traverse the membrane as a helical; Signal-anchor for type II membrane protein segment. The Periplasmic segment spans residues tryptophan 133–glutamine 337. The span at threonine 144–asparagine 167 shows a compositional bias: polar residues. The interval threonine 144–alanine 235 is disordered. The span at threonine 168 to glutamine 207 shows a compositional bias: low complexity. Polar residues predominate over residues asparagine 208 to valine 218. Residues aspartate 219–alanine 235 show a composition bias toward low complexity.

This sequence belongs to the RodZ family.

It localises to the cell inner membrane. Its function is as follows. Cytoskeletal protein that is involved in cell-shape control through regulation of the length of the long axis. In Escherichia coli (strain K12 / MC4100 / BW2952), this protein is Cytoskeleton protein RodZ.